The following is a 329-amino-acid chain: R-linalool synthase (329 aa).

D79 is a Mg(2+) binding site. A DDXXD motif motif is present at residues 79 to 83; that stretch reads DDQFD. R172 lines the substrate pocket. N218 and S222 together coordinate Mg(2+). Positions 218–226 match the NXXXSXXXD motif motif; it reads NELHSFEKD. K225 serves as a coordination point for substrate. D226 provides a ligand contact to Mg(2+). 308–309 lines the substrate pocket; sequence RY.

It belongs to the terpene synthase family. Homodimer. Mg(2+) serves as cofactor.

The enzyme catalyses (2E)-geranyl diphosphate + H2O = (R)-linalool + diphosphate. It catalyses the reaction (2E,6E)-farnesyl diphosphate + H2O = (6E)-nerolidol + diphosphate. In vitro, catalyzes the formation of R-linalool from geranyl diphosphate (GPP). Can also accept farnesyl diphosphate (FPP) as substrate to produce trans-nerolidol. The polypeptide is R-linalool synthase (Streptomyces clavuligerus).